The chain runs to 603 residues: Thread biopolymer filament subunit gamma (603 aa).

A head region spans residues 1–191 (MASHSSVSYR…ENETMEEELK (191 aa)). An IF rod domain is found at 158-476 (VKNILGTLNQ…KLLEGQELMV (319 aa)). The tract at residues 193–227 (LTGGVPMSPDSTVNLENVETQVTEMLTEVSNLTLE) is coil 1A. The linker 1 stretch occupies residues 228–240 (RVRLEIDVDHLRA). The tract at residues 241–341 (TADEIKSKYE…DALNVMREEY (101 aa)) is coil 1B. Positions 342–362 (QQVVTKNVQEAETYCKMQIDQ) are linker 12. The segment at 363–381 (IQGISTQTTEQISILDKEI) is coil 2A. The tract at residues 382–389 (NTLEKELQ) is linker 2. Residues 390 to 510 (PLNVEYQRLL…SSVGYGASST (121 aa)) are coil 2B. Positions 511-603 (TLGAISGGYS…GHDSTIILQQ (93 aa)) are tail. A compositionally biased stretch (low complexity) spans 562–587 (SSSGGHSMYSSSSMKRSSSKSASASA). The interval 562-603 (SSSGGHSMYSSSSMKRSSSKSASASAGGYGTSGHDSTIILQQ) is disordered.

It belongs to the intermediate filament family. In terms of assembly, coiled-coil heterodimer of an alpha and a gamma subunit. Assemble into 10 nm filaments. Forms a massive, conical, intermediate filament biopolymer of approximately 60 cm.

The protein localises to the secreted. Its subcellular location is the extracellular space. Functionally, released extracellularly into seawater and provides physical and biological defense against invasive organism by modulation of the viscoelastic properties of mucus. In Eptatretus stoutii (Pacific hagfish), this protein is Thread biopolymer filament subunit gamma.